We begin with the raw amino-acid sequence, 157 residues long: Putative pre-16S rRNA nuclease (157 aa).

Belongs to the YqgF nuclease family.

The protein resides in the cytoplasm. Its function is as follows. Could be a nuclease involved in processing of the 5'-end of pre-16S rRNA. The protein is Putative pre-16S rRNA nuclease of Orientia tsutsugamushi (strain Ikeda) (Rickettsia tsutsugamushi).